A 245-amino-acid chain; its full sequence is DNA polymerase sliding clamp 1 (245 aa).

The protein belongs to the PCNA family. In terms of assembly, homotrimer. The subunits circularize to form a toroid; DNA passes through its center. Replication factor C (RFC) is required to load the toroid on the DNA.

Functionally, sliding clamp subunit that acts as a moving platform for DNA processing. Responsible for tethering the catalytic subunit of DNA polymerase and other proteins to DNA during high-speed replication. In Sulfurisphaera ohwakuensis, this protein is DNA polymerase sliding clamp 1.